Reading from the N-terminus, the 297-residue chain is Ribosomal RNA small subunit methyltransferase H (297 aa).

Residues 30–32 (GGY), D48, F75, D96, and Q103 contribute to the S-adenosyl-L-methionine site.

This sequence belongs to the methyltransferase superfamily. RsmH family.

The protein resides in the cytoplasm. It carries out the reaction cytidine(1402) in 16S rRNA + S-adenosyl-L-methionine = N(4)-methylcytidine(1402) in 16S rRNA + S-adenosyl-L-homocysteine + H(+). In terms of biological role, specifically methylates the N4 position of cytidine in position 1402 (C1402) of 16S rRNA. This is Ribosomal RNA small subunit methyltransferase H from Ehrlichia canis (strain Jake).